We begin with the raw amino-acid sequence, 536 residues long: Global nitrogen regulator NrpR (536 aa).

The tract at residues valine 7 to leucine 72 is winged helix-turn-helix. 2 NRD regions span residues arginine 80–phenylalanine 314 and lysine 315–isoleucine 536.

This sequence belongs to the NrpR family. Homotetramer. Binds to a single operator as a dimer and cooperatively to two operators as a dimer pair.

Its activity is regulated as follows. Under nitrogen limitation, binding of the intracellular nitrogen metabolite 2-oxoglutarate to NrpR decreases the binding affinity of NrpR to DNA, leading to initiation of transcription. Transcriptional repressor of nitrogen fixation and assimilation genes. Binds to two tandem operators in the glnA and nif promoters, thereby blocking transcription of the genes. In Methanococcus maripaludis (strain DSM 14266 / JCM 13030 / NBRC 101832 / S2 / LL), this protein is Global nitrogen regulator NrpR.